The following is a 372-amino-acid chain: Cell division protein FtsZ 1 (372 aa).

GTP contacts are provided by residues 51-55, 138-140, Glu169, Arg173, and Asp216; these read GAGCN and GTG. The disordered stretch occupies residues 352–372; sequence EETPAPSEEETTPVKIDIPEL.

It belongs to the FtsZ family. In terms of assembly, homodimer. Polymerizes to form a dynamic ring structure in a strictly GTP-dependent manner. Interacts directly with several other division proteins.

It is found in the cytoplasm. Functionally, essential cell division protein that forms a contractile ring structure (Z ring) at the future cell division site. The regulation of the ring assembly controls the timing and the location of cell division. One of the functions of the FtsZ ring is to recruit other cell division proteins to the septum to produce a new cell wall between the dividing cells. Binds GTP and shows GTPase activity. The polypeptide is Cell division protein FtsZ 1 (Pyrococcus horikoshii (strain ATCC 700860 / DSM 12428 / JCM 9974 / NBRC 100139 / OT-3)).